Consider the following 20-residue polypeptide: Agglutinin beta-3 chain (20 aa).

The disordered stretch occupies residues 1–20 (GPNGKSQSIIVGPWGDRVTN).

Belongs to the jacalin lectin family. In terms of assembly, formed of four alpha chains and four beta chains.

Its function is as follows. D-galactose-specific lectin, binds the T-antigen structure Gal-beta1,3-GalNAc. In Maclura pomifera (Osage orange), this protein is Agglutinin beta-3 chain.